A 192-amino-acid polypeptide reads, in one-letter code: Probable nicotinate-nucleotide adenylyltransferase (192 aa).

This sequence belongs to the NadD family.

It carries out the reaction nicotinate beta-D-ribonucleotide + ATP + H(+) = deamido-NAD(+) + diphosphate. Its pathway is cofactor biosynthesis; NAD(+) biosynthesis; deamido-NAD(+) from nicotinate D-ribonucleotide: step 1/1. Its function is as follows. Catalyzes the reversible adenylation of nicotinate mononucleotide (NaMN) to nicotinic acid adenine dinucleotide (NaAD). The protein is Probable nicotinate-nucleotide adenylyltransferase of Rhizobium leguminosarum bv. trifolii (strain WSM2304).